The primary structure comprises 878 residues: Alanine--tRNA ligase (878 aa).

Positions 566, 570, 668, and 672 each coordinate Zn(2+). Residues 846 to 866 (GGGRPDMAQAGGKQPEKLEEA) are disordered.

Belongs to the class-II aminoacyl-tRNA synthetase family. Zn(2+) serves as cofactor.

Its subcellular location is the cytoplasm. The enzyme catalyses tRNA(Ala) + L-alanine + ATP = L-alanyl-tRNA(Ala) + AMP + diphosphate. Catalyzes the attachment of alanine to tRNA(Ala) in a two-step reaction: alanine is first activated by ATP to form Ala-AMP and then transferred to the acceptor end of tRNA(Ala). Also edits incorrectly charged Ser-tRNA(Ala) and Gly-tRNA(Ala) via its editing domain. This is Alanine--tRNA ligase from Bacillus pumilus (strain SAFR-032).